The following is a 716-amino-acid chain: Epidermal growth factor receptor kinase substrate 8-like protein 1 (716 aa).

The 130-residue stretch at 35 to 164 (QYHVNHLVTF…LQNYRSGRGE (130 aa)) folds into the PTB domain. 5 disordered regions span residues 175 to 194 (EELR…QRRP), 203 to 249 (VEPS…GPEL), 404 to 472 (PGVE…ETES), 528 to 582 (YNIL…SLDP), and 600 to 628 (SRLA…PRSE). Ser-182 bears the Phosphoserine mark. Phosphothreonine is present on Thr-187. Over residues 435–446 (PWEDPVEKQLQH) the composition is skewed to basic and acidic residues. Residues 453–464 (QSAPQVAVNGQQ) are compositionally biased toward polar residues. The SH3 domain maps to 477 to 536 (KARKWVLCNYDFQARNGSELSVKHRDVLEVLDDRRKWWKVRDHQGQEGYVPYNILTPHPG). Pro residues predominate over residues 553–563 (TPPPPPAPAPA). The stretch at 682–713 (VQRALLEDREKVSELEAVMEKQKKKVEGETKT) forms a coiled coil.

It belongs to the EPS8 family. As to quaternary structure, interacts with ABI1. Part of a complex that contains SOS1, ABI1 and EPS8L2. Associates with F-actin. Detected in placenta, skin, mammary gland, bone marrow and stomach.

The protein resides in the cytoplasm. Functionally, stimulates guanine exchange activity of SOS1. May play a role in membrane ruffling and remodeling of the actin cytoskeleton. The chain is Epidermal growth factor receptor kinase substrate 8-like protein 1 (Eps8l1) from Mus musculus (Mouse).